Reading from the N-terminus, the 216-residue chain is Probable transaldolase (216 aa).

Lysine 83 serves as the catalytic Schiff-base intermediate with substrate.

This sequence belongs to the transaldolase family. Type 3B subfamily.

The protein localises to the cytoplasm. The catalysed reaction is D-sedoheptulose 7-phosphate + D-glyceraldehyde 3-phosphate = D-erythrose 4-phosphate + beta-D-fructose 6-phosphate. Its pathway is carbohydrate degradation; pentose phosphate pathway; D-glyceraldehyde 3-phosphate and beta-D-fructose 6-phosphate from D-ribose 5-phosphate and D-xylulose 5-phosphate (non-oxidative stage): step 2/3. In terms of biological role, transaldolase is important for the balance of metabolites in the pentose-phosphate pathway. The sequence is that of Probable transaldolase from Methanococcus aeolicus (strain ATCC BAA-1280 / DSM 17508 / OCM 812 / Nankai-3).